Consider the following 209-residue polypeptide: Small ribosomal subunit protein uS4 (209 aa).

The S4 RNA-binding domain occupies 99–162 (RRLDNMVYRL…RKNNKIIEAM (64 aa)).

The protein belongs to the universal ribosomal protein uS4 family. As to quaternary structure, part of the 30S ribosomal subunit. Contacts protein S5. The interaction surface between S4 and S5 is involved in control of translational fidelity.

In terms of biological role, one of the primary rRNA binding proteins, it binds directly to 16S rRNA where it nucleates assembly of the body of the 30S subunit. Its function is as follows. With S5 and S12 plays an important role in translational accuracy. The chain is Small ribosomal subunit protein uS4 from Syntrophus aciditrophicus (strain SB).